A 367-amino-acid chain; its full sequence is Eukaryotic translation initiation factor 3 subunit H (367 aa).

In terms of domain architecture, MPN spans 14-166 (VQVEALVVMK…LRAFRLSPNF (153 aa)).

This sequence belongs to the eIF-3 subunit H family. Component of the eukaryotic translation initiation factor 3 (eIF-3) complex.

It localises to the cytoplasm. Its function is as follows. Component of the eukaryotic translation initiation factor 3 (eIF-3) complex, which is involved in protein synthesis of a specialized repertoire of mRNAs and, together with other initiation factors, stimulates binding of mRNA and methionyl-tRNAi to the 40S ribosome. The eIF-3 complex specifically targets and initiates translation of a subset of mRNAs involved in cell proliferation. The polypeptide is Eukaryotic translation initiation factor 3 subunit H (Sclerotinia sclerotiorum (strain ATCC 18683 / 1980 / Ss-1) (White mold)).